Consider the following 43-residue polypeptide: Cuticle protein CP434 (43 aa).

Repeat copies occupy residues 1 to 18 and 25 to 42.

In terms of tissue distribution, calcified shell.

The sequence is that of Cuticle protein CP434 from Cancer pagurus (Rock crab).